The chain runs to 685 residues: Threonine--tRNA ligase (685 aa).

The 65-residue stretch at 1 to 65 folds into the TGS domain; it reads MSTPASAAPA…DTDVEVEPVA (65 aa). Residues 262 to 568 are catalytic; sequence DHRKLGSELD…LTEHYAGAFP (307 aa). Cysteine 367, histidine 418, and histidine 545 together coordinate Zn(2+).

Belongs to the class-II aminoacyl-tRNA synthetase family. As to quaternary structure, homodimer. The cofactor is Zn(2+).

It is found in the cytoplasm. It catalyses the reaction tRNA(Thr) + L-threonine + ATP = L-threonyl-tRNA(Thr) + AMP + diphosphate + H(+). Its function is as follows. Catalyzes the attachment of threonine to tRNA(Thr) in a two-step reaction: L-threonine is first activated by ATP to form Thr-AMP and then transferred to the acceptor end of tRNA(Thr). Also edits incorrectly charged L-seryl-tRNA(Thr). This Rhodococcus jostii (strain RHA1) protein is Threonine--tRNA ligase.